Here is a 517-residue protein sequence, read N- to C-terminus: Amidophosphoribosyltransferase (517 aa).

Methionine 1 is subject to N-acetylmethionine. The propeptide occupies 1–11 (MELEESGIREE). The active-site Nucleophile is cysteine 12. The Glutamine amidotransferase type-2 domain occupies 12 to 261 (CGVFGCIASG…PGEIVEISRH (250 aa)). Cysteine 280 contacts [4Fe-4S] cluster. 3 residues coordinate Mg(2+): serine 327, aspartate 389, and aspartate 390. Positions 426, 503, and 506 each coordinate [4Fe-4S] cluster.

In the C-terminal section; belongs to the purine/pyrimidine phosphoribosyltransferase family. In terms of assembly, homotetramer. The cofactor is Mg(2+). It depends on [4Fe-4S] cluster as a cofactor. In terms of tissue distribution, expressed at a high level in brain, heart, liver and stomach.

The enzyme catalyses 5-phospho-beta-D-ribosylamine + L-glutamate + diphosphate = 5-phospho-alpha-D-ribose 1-diphosphate + L-glutamine + H2O. The protein operates within purine metabolism; IMP biosynthesis via de novo pathway; N(1)-(5-phospho-D-ribosyl)glycinamide from 5-phospho-alpha-D-ribose 1-diphosphate: step 1/2. Its activity is regulated as follows. Activated by the substrate 5-phospho-alpha-D-ribosyl-1-pyrophosphate and inhibited by the purine ribonucleotides, the end products of purine biosynthesis. Its function is as follows. Catalyzes the formation of phosphoribosylamine from phosphoribosylpyrophosphate (PRPP) and glutamine. This is Amidophosphoribosyltransferase (Ppat) from Rattus norvegicus (Rat).